A 22-amino-acid polypeptide reads, in one-letter code: Brevinin-1OKd (22 aa).

Residue K22 is modified to Lysine amide.

Expressed by the skin glands.

The protein resides in the secreted. Functionally, antimicrobial peptide. The protein is Brevinin-1OKd of Nidirana okinavana (Kampira Falls frog).